A 118-amino-acid chain; its full sequence is NLYQFKNMIHCTVPSRPWWHFADYGCYCGRGGKGTPIDDLDRCCQVHDNCYEKAGKMGCWPYFTLYKYKCSKGTLTCNGRNGKCAAAVCNCDLVAANCFAGAPYINANYNIDFKKRCQ.

7 disulfides stabilise this stretch: cysteine 11–cysteine 70, cysteine 26–cysteine 117, cysteine 28–cysteine 44, cysteine 43–cysteine 98, cysteine 50–cysteine 91, cysteine 59–cysteine 84, and cysteine 77–cysteine 89. Positions 27, 29, and 31 each coordinate Ca(2+). Histidine 47 is a catalytic residue. Ca(2+) is bound at residue aspartate 48. Positions 52-69 (EKAGKMGCWPYFTLYKYK) match the Coagulation factor Xa binding motif motif. The active site involves aspartate 92.

The protein belongs to the phospholipase A2 family. Group I subfamily. D49 sub-subfamily. It depends on Ca(2+) as a cofactor. As to expression, expressed by the venom gland.

Its subcellular location is the secreted. The catalysed reaction is a 1,2-diacyl-sn-glycero-3-phosphocholine + H2O = a 1-acyl-sn-glycero-3-phosphocholine + a fatty acid + H(+). In terms of biological role, snake venom phospholipase A2 (PLA2) that shows anticoagulant activity, has cytotoxic activity and affects neuromuscular transmission in vitro. PLA2 catalyzes the calcium-dependent hydrolysis of the 2-acyl groups in 3-sn-phosphoglycerides. The sequence is that of Basic phospholipase A2 nigexine from Naja pallida (Red spitting cobra).